A 994-amino-acid chain; its full sequence is MKQKETKTSQIALVDGEKLSITDSFASLFTLDEEEENDSVDNEEIKLTKEKHEKLLLLFWLHCKFPNGLEWLHSSSDLLPEQVSEWFNFYQKYRFKRGRNFNLSARESVTPIVEEPIVPEEPDNLEGVSEETPLKETSLELSEEEIITSKSPIPSPETIHKNIDVEEKETIEPTTPVKEVETTAHAEEEKGPLTPDSEYAARQLTEELANKSSQEEGVDKQLRVVEATEKEHEEDGNEENVTVTKPVEVATDQVESKEVKKKEVSETTEPTAPPVTVAEVLEIEDKVPKVDEVEEVHSPEAKVTENDVENVQSGIDIEKTIQLLNNQEIPSEQQIISVDKATESPVQEVAVDVNEKPVDEIVEPSKLQMENKLPSEKSPTIDRTGVEAPLFELSVSMPLTLIPPSKFSEPVKPELSSEAWLLRTEMSPLHLRLKNAHKYVLSDNWSHAYREEIVRQSLHHLTVAKEKGIWSFRQPKRQNEMPRLKTHRDYVLDEMQWMSIDFSQERKWKIILAHRMANWVMDYHQASDKCTVCTPASLSKNKKPYMQENEHQKDSHEETFNEQIVSHFNLNDNNNNKVLSIPRDSLQFYNAVFSDDIFVTTNSEQIQNCVLNVPMYGPPTENNEYCEEISEKYPITPVSRFAYAKTKLKSTCAKASRKRLFNQLELSPPESFMEKKARSDENQLDGNKIKDDNQKLSSVGTFSVRPPYPPSSKDIRPEAPWLPEEDELLLLLLRRYSFNWEFVASRLTPPGLYIPLAEKRTAWDCFERWIQVDPRAANVQLTGSHARLAQQKLDESLRHSDKVSQHLSLRDEGTPNHLIKHNSYFLLPTVSRHYRPITIFEAIRKILKKREFAKKPTMTKRAIAPSAASTEKLPPVPSPLELSRLKSEREAQIQQIQAQRNFAQLQSQNRALRPQNAAVAAGAQQHNQQLAAFQAVAASQNSSNNSSAGVSPIAGRMVPRLQPYAVSSSLKLTPEQIHQLQQRKQTVPTTERTQ.

Disordered stretches follow at residues 122–275 and 288–308; these read PDNL…APPV and PKVD…ENDV. Composition is skewed to basic and acidic residues over residues 158-171, 178-191, 204-233, 254-265, and 288-305; these read TIHK…KETI, KEVE…EEKG, LTEE…KEHE, VESKEVKKKEVS, and PKVD…KVTE. Residues Ser-298 and Ser-378 each carry the phosphoserine modification. The HSA domain maps to 475–548; sequence PKRQNEMPRL…SKNKKPYMQE (74 aa). The segment at 671 to 693 is disordered; that stretch reads SFMEKKARSDENQLDGNKIKDDN. Over residues 672-693 the composition is skewed to basic and acidic residues; the sequence is FMEKKARSDENQLDGNKIKDDN. The region spanning 713-773 is the Myb-like domain; sequence KDIRPEAPWL…DCFERWIQVD (61 aa). 2 disordered regions span residues 857–880 and 975–994; these read TMTK…PSPL and EQIH…ERTQ. Residues 880–912 are a coiled coil; it reads LELSRLKSEREAQIQQIQAQRNFAQLQSQNRAL.

It belongs to the EAF1 family. As to quaternary structure, component of the NuA4 histone acetyltransferase complex.

Its subcellular location is the nucleus. In terms of biological role, component of the NuA4 histone acetyltransferase complex which is involved in transcriptional activation of selected genes principally by acetylation of nucleosomal histone H4 and H2A. The NuA4 complex is also involved in DNA repair. The chain is Chromatin modification-related protein vid21 (vid21) from Schizosaccharomyces pombe (strain 972 / ATCC 24843) (Fission yeast).